Consider the following 251-residue polypeptide: uncharacterized protein (251 aa).

3 N-linked (GlcNAc...) asparagine; by host glycosylation sites follow: N149, N152, and N207. The chain crosses the membrane as a helical span at residues 226-246 (YLIFIIIIIIFIILILLWIKY).

Belongs to the glycosyltransferase 32 family.

The protein resides in the membrane. This is an uncharacterized protein from Acanthamoeba polyphaga (Amoeba).